We begin with the raw amino-acid sequence, 141 residues long: Putative antirestriction protein YubI (141 aa).

Belongs to the antirestriction protein family.

The sequence is that of Putative antirestriction protein YubI (yubI) from Escherichia coli (strain K12).